The chain runs to 1931 residues: Cytadherence high molecular weight protein 2 (1931 aa).

Coiled coils occupy residues 1626–1659 (KEHQ…LTES), 1768–1846 (FNTQ…IKTN), and 1903–1930 (HAKK…KQTS).

Functionally, component of the cytoskeleton-like structure which stabilizes the shape of the wall-less Mycoplasma. This cytoskeleton-like network of accessory proteins containing HMW proteins 1 to 5 allows the proper anchoring of cytadhesin proteins in the mycoplasmal membrane at the attachment organelle. This is Cytadherence high molecular weight protein 2 (hlp2) from Mycoplasmoides gallisepticum (strain R(low / passage 15 / clone 2)) (Mycoplasma gallisepticum).